A 654-amino-acid chain; its full sequence is Macrolide export ATP-binding/permease protein MacB (654 aa).

The ABC transporter domain maps to 6 to 244 (IEISALNRIF…TSASSATDAA (239 aa)). 42 to 49 (GTSGSGKS) provides a ligand contact to ATP. A run of 4 helical transmembrane segments spans residues 279-299 (LLTMLGIIIGITAVVSIVAIG), 534-554 (IAVISLIVGGIGVMNIMLVSV), 584-604 (MVCLIGGGIGILLSFGVGALF), and 617-637 (VTAIVSAVVCSSLIGVLFGFL).

It belongs to the ABC transporter superfamily. Macrolide exporter (TC 3.A.1.122) family. In terms of assembly, homodimer. Part of the tripartite efflux system MacAB-TolC, which is composed of an inner membrane transporter, MacB, a periplasmic membrane fusion protein, MacA, and an outer membrane component, TolC. The complex forms a large protein conduit and can translocate molecules across both the inner and outer membranes. Interacts with MacA.

The protein localises to the cell inner membrane. Its function is as follows. Part of the tripartite efflux system MacAB-TolC. MacB is a non-canonical ABC transporter that contains transmembrane domains (TMD), which form a pore in the inner membrane, and an ATP-binding domain (NBD), which is responsible for energy generation. Confers resistance against macrolides. The polypeptide is Macrolide export ATP-binding/permease protein MacB (Hahella chejuensis (strain KCTC 2396)).